The sequence spans 84 residues: Venom protein SynTx (84 aa).

A signal peptide spans 1–19 (TLLLTLVVVTIVCLDLGYT). 4 cysteine pairs are disulfide-bonded: Cys-22–Cys-43, Cys-36–Cys-61, Cys-65–Cys-76, and Cys-77–Cys-82.

It belongs to the three-finger toxin family. Short-chain subfamily. Aminergic toxin sub-subfamily. As to quaternary structure, homodimer; disulfide-linked. As to expression, expressed by the venom gland.

The protein resides in the secreted. Functionally, this protein shows a synergetic toxic effect in that it enhances the toxicity of other toxins. This chain is Venom protein SynTx, found in Dendroaspis jamesoni jamesoni (Jameson's mamba).